We begin with the raw amino-acid sequence, 56 residues long: Ovomucoid (56 aa).

The region spanning 6 to 56 (VDCSEYPKPACTMEQRPLCGSDNKTYGNKCNFCNAVVESNGTLTLSHFGKC) is the Kazal-like domain. Cystine bridges form between Cys-8–Cys-38, Cys-16–Cys-35, and Cys-24–Cys-56. N-linked (GlcNAc...) asparagine glycosylation is present at Asn-45.

The protein localises to the secreted. The sequence is that of Ovomucoid from Afropavo congensis (Congo peafowl).